The sequence spans 322 residues: MYTMTDQKQWKGRIDSTTNRSSFRLHQQVKRIAMNDVSASDKKGAAIIGFICDEGVRRNQGRVGAANGPNALREGLSSLPWTFEEEQQIIDVGNIICLNHALEEAQRELGDVVSTLLQKKLQCVVLGGGHETLYGHYLGVRAAIPKDAKIGIIKIDAHIDLRPYDEQPSSGTMFRQILEQDPHVDYFVVGIQRYGYTKELFEKADELQVKYVIEDDMTSAANIQPLMDDLQHYMDQHDYVLLTLCMDVLNAAAAPGVSAPSPFGLEPTTVRTILQKVTSHPHTHSFDICEVNPSLDENGRTVKLGAYFVYEALNNLLGGQGL.

H130, D156, H158, D160, C245, and D247 together coordinate Mn(2+).

The protein belongs to the arginase family. Requires Mn(2+) as cofactor.

The enzyme catalyses N-formimidoyl-L-glutamate + H2O = formamide + L-glutamate. Its pathway is amino-acid degradation; L-histidine degradation into L-glutamate; L-glutamate from N-formimidoyl-L-glutamate (hydrolase route): step 1/1. Functionally, catalyzes the conversion of N-formimidoyl-L-glutamate to L-glutamate and formamide. This is Formimidoylglutamase from Lysinibacillus sphaericus (strain C3-41).